The chain runs to 1410 residues: SNF2 domain-containing protein CLASSY 3 (1410 aa).

The segment covering 1-12 (MECIGKRVKSRS) has biased composition (basic residues). Disordered regions lie at residues 1–74 (MECI…SVPN), 87–108 (DLNV…SEQN), 209–330 (GEIE…PIKR), 344–376 (RSGS…QREV), 428–593 (NVSK…LKDK), and 632–654 (EDEA…REDH). The Nuclear localization signal 1 signature appears at 22–29 (RKKMETVA). The segment covering 95–108 (GPSSSRLTDGSEQN) has biased composition (polar residues). Residues 245 to 266 (SDGEDSSSETDEEEEENQDSED) are compositionally biased toward acidic residues. Positions 248-278 (EDSSSETDEEEEENQDSEDNNTKDNVTVESL) form a coiled coil. The span at 276-301 (ESLSSEDPSSSSSSSSSSSSSSSSSS) shows a compositional bias: low complexity. Residues 306–323 (SYVKEVVGDNRDDDDLRK) show a composition bias toward basic and acidic residues. Residues 328 to 335 (IKRVSLVE) carry the Nuclear localization signal 2 motif. Basic and acidic residues predominate over residues 351–376 (KPRERDNKIQKLNHREEEKKERQREV). Positions 356 to 377 (DNKIQKLNHREEEKKERQREVV) form a coiled coil. Positions 428 to 446 (NVSKYEDSVSINSGKTTGA) are enriched in polar residues. 2 stretches are compositionally biased toward basic and acidic residues: residues 450-463 (PEVE…ELNT) and 488-504 (EPSR…KEVQ). Over residues 576–587 (SSISSGDGYESD) the composition is skewed to low complexity. The 211-residue stretch at 850-1060 (FENSDETGGC…CNVLGLARPK (211 aa)) folds into the Helicase ATP-binding domain. An ATP-binding site is contributed by 863 to 870 (HAPGTGKT). Residues 1011-1014 (DEAH) carry the DEAH box motif. Positions 1132-1139 (QRRVLESI) match the Nuclear localization signal 3 motif. Positions 1206 to 1359 (EFVELCEVIK…ELVFACSSRH (154 aa)) constitute a Helicase C-terminal domain.

Belongs to the SNF2/RAD54 helicase family. As to quaternary structure, interacts with NRPD1.

It is found in the nucleus. Its function is as follows. Probable chromatin remodeling factor. The polypeptide is SNF2 domain-containing protein CLASSY 3 (CLSY3) (Arabidopsis thaliana (Mouse-ear cress)).